Reading from the N-terminus, the 197-residue chain is Imidazoleglycerol-phosphate dehydratase (197 aa).

Belongs to the imidazoleglycerol-phosphate dehydratase family.

Its subcellular location is the cytoplasm. It catalyses the reaction D-erythro-1-(imidazol-4-yl)glycerol 3-phosphate = 3-(imidazol-4-yl)-2-oxopropyl phosphate + H2O. The protein operates within amino-acid biosynthesis; L-histidine biosynthesis; L-histidine from 5-phospho-alpha-D-ribose 1-diphosphate: step 6/9. The chain is Imidazoleglycerol-phosphate dehydratase from Gloeobacter violaceus (strain ATCC 29082 / PCC 7421).